The chain runs to 173 residues: MTEPIFMVGARGCGKTTVGRELARALGYEFVDTDIFMQHTSGMTVADVVAAEGWPGFRRRESEALQAVATPNRVVATGGGMVLLEQNRQFMRAHGTVVYLFAPAEELALRLQASPQAHQRPTLTGRPIAEEMEAVLREREALYQDVAHYVVDATQPPAAIVCELMQTMRLPAA.

Glycine 12–threonine 17 serves as a coordination point for ATP. Residues threonine 16 and aspartate 32 each contribute to the Mg(2+) site. Substrate is bound by residues aspartate 34, arginine 58, and glycine 79. An LID domain region spans residues glutamine 112–arginine 126. Arginine 120 lines the ATP pocket. A substrate-binding site is contributed by arginine 139. Glutamine 155 is an ATP binding site.

In terms of assembly, monomer. Requires Mg(2+) as cofactor.

It localises to the cytoplasm. It catalyses the reaction shikimate + ATP = 3-phosphoshikimate + ADP + H(+). Its pathway is metabolic intermediate biosynthesis; chorismate biosynthesis; chorismate from D-erythrose 4-phosphate and phosphoenolpyruvate: step 5/7. Its activity is regulated as follows. Inhibited by chloride and sulfate ions. Functionally, catalyzes the specific phosphorylation of the 3-hydroxyl group of shikimic acid using ATP as a cosubstrate. The chain is Shikimate kinase 2 (aroL) from Dickeya chrysanthemi (Pectobacterium chrysanthemi).